We begin with the raw amino-acid sequence, 293 residues long: B1-hordein (293 aa).

The N-terminal stretch at 1-19 is a signal peptide; it reads MKTFLIFALLAIAATSTIA. The segment at 20–90 is disordered; the sequence is QQQPFPQQPI…PPFWQQKPFP (71 aa). Pro residues predominate over residues 25–81; sequence PQQPIPQQPQPYPQQPQPYPQQPFPPQQPFPQQPVPQQPQPYPQQPFPPQQPFPQQP.

Belongs to the gliadin/glutenin family. Developing endosperm.

Functionally, sulfur-rich seed storage protein. This Hordeum vulgare (Barley) protein is B1-hordein.